The primary structure comprises 565 residues: uncharacterized protein (565 aa).

Residues 1-21 (MKIPSQQVLLALPLLASPAQS) form the signal peptide. N-linked (GlcNAc...) asparagine glycosylation is found at Asn-46 and Asn-88. The FAD-binding PCMH-type domain occupies 118–302 (QGIVPYYSVS…TSVTYKTHPK (185 aa)). His-155 is modified (pros-8alpha-FAD histidine). Asn-191, Asn-314, Asn-364, Asn-371, and Asn-484 each carry an N-linked (GlcNAc...) asparagine glycan.

This sequence belongs to the oxygen-dependent FAD-linked oxidoreductase family. The cofactor is FAD.

It is found in the secreted. This is an uncharacterized protein from Arthroderma benhamiae (strain ATCC MYA-4681 / CBS 112371) (Trichophyton mentagrophytes).